The following is a 78-amino-acid chain: Beta-defensin 12 (78 aa).

The N-terminal stretch at 1-27 (MALSREVFYFGFALFFIVVELPSGSWA) is a signal peptide. Cystine bridges form between C46/C73, C53/C67, and C57/C74.

The protein belongs to the beta-defensin family. As to expression, only expressed in epididymis (caput, corpus and cauda).

The protein localises to the secreted. Functionally, has antibacterial activity. The polypeptide is Beta-defensin 12 (Defb12) (Mus musculus (Mouse)).